We begin with the raw amino-acid sequence, 195 residues long: Molybdenum cofactor guanylyltransferase (195 aa).

Residues 10 to 12 (LAG), Lys23, Asn51, Asp69, and Asp99 each bind GTP. Asp99 contributes to the Mg(2+) binding site.

The protein belongs to the MobA family. Monomer. Requires Mg(2+) as cofactor.

It is found in the cytoplasm. The enzyme catalyses Mo-molybdopterin + GTP + H(+) = Mo-molybdopterin guanine dinucleotide + diphosphate. Its function is as follows. Transfers a GMP moiety from GTP to Mo-molybdopterin (Mo-MPT) cofactor (Moco or molybdenum cofactor) to form Mo-molybdopterin guanine dinucleotide (Mo-MGD) cofactor. This chain is Molybdenum cofactor guanylyltransferase, found in Yersinia pestis bv. Antiqua (strain Antiqua).